We begin with the raw amino-acid sequence, 379 residues long: Queuine tRNA-ribosyltransferase (379 aa).

D94 serves as the catalytic Proton acceptor. Residues 94 to 98 (DSGGF), D148, Q191, and G218 each bind substrate. Residues 249 to 255 (GVGSPDS) form an RNA binding region. D268 functions as the Nucleophile in the catalytic mechanism. The tract at residues 273 to 277 (TRIAR) is RNA binding; important for wobble base 34 recognition. Residues C306, C308, C311, and H337 each contribute to the Zn(2+) site.

It belongs to the queuine tRNA-ribosyltransferase family. In terms of assembly, homodimer. Within each dimer, one monomer is responsible for RNA recognition and catalysis, while the other monomer binds to the replacement base PreQ1. Requires Zn(2+) as cofactor.

It catalyses the reaction 7-aminomethyl-7-carbaguanine + guanosine(34) in tRNA = 7-aminomethyl-7-carbaguanosine(34) in tRNA + guanine. Its pathway is tRNA modification; tRNA-queuosine biosynthesis. Its function is as follows. Catalyzes the base-exchange of a guanine (G) residue with the queuine precursor 7-aminomethyl-7-deazaguanine (PreQ1) at position 34 (anticodon wobble position) in tRNAs with GU(N) anticodons (tRNA-Asp, -Asn, -His and -Tyr). Catalysis occurs through a double-displacement mechanism. The nucleophile active site attacks the C1' of nucleotide 34 to detach the guanine base from the RNA, forming a covalent enzyme-RNA intermediate. The proton acceptor active site deprotonates the incoming PreQ1, allowing a nucleophilic attack on the C1' of the ribose to form the product. After dissociation, two additional enzymatic reactions on the tRNA convert PreQ1 to queuine (Q), resulting in the hypermodified nucleoside queuosine (7-(((4,5-cis-dihydroxy-2-cyclopenten-1-yl)amino)methyl)-7-deazaguanosine). In Halalkalibacterium halodurans (strain ATCC BAA-125 / DSM 18197 / FERM 7344 / JCM 9153 / C-125) (Bacillus halodurans), this protein is Queuine tRNA-ribosyltransferase.